The sequence spans 750 residues: uncharacterized protein (750 aa).

This is an uncharacterized protein from Escherichia coli O157:H7.